Reading from the N-terminus, the 236-residue chain is V-set and transmembrane domain-containing protein 1 (236 aa).

The first 16 residues, 1 to 16 (MTAEFLSLLCLGLCLG), serve as a signal peptide directing secretion. At 17 to 135 (YEDEKKNEKP…APSMKTDTRT (119 aa)) the chain is on the extracellular side. In terms of domain architecture, Ig-like V-type spans 27–114 (PKPSLHAWPS…EWSESSEHLQ (88 aa)). Residues Asn-44 and Asn-55 are each glycosylated (N-linked (GlcNAc...) asparagine). Cys-49 and Cys-96 are disulfide-bonded. A helical membrane pass occupies residues 136–156 (IFVAIFSCISILLLFLSVFII). Residues 157-236 (YRCSQHSSSS…GSHEYAALKV (80 aa)) lie on the Cytoplasmic side of the membrane. Residues 166-200 (SEESTKRTSHSKLPEQEAAEADLSNMERVSLSTAD) form a disordered region. 2 consecutive short sequence motifs (ITIM motif) follow at residues 204 to 209 (VTYAEL) and 229 to 234 (HEYAAL). A disordered region spans residues 215-236 (SEAASDTTQEPPGSHEYAALKV).

Isoform 2 is N-glycosylated. Expressed on myeloid (neutrophils, eosinophils and monocytes) but not on lymphoid cells.

It is found in the membrane. The protein resides in the secreted. Functionally, behaves as a cytokine, promoting IL17A secretion by CD4+ T-cells, and differentiation and activation of IL17 producing helper T-cells (TH17). Its function is as follows. Inhibitory immune receptor involved in the regulation of phagocytes. The sequence is that of V-set and transmembrane domain-containing protein 1 (VSTM1) from Homo sapiens (Human).